The sequence spans 962 residues: Protease 3 (962 aa).

Residues methionine 1–alanine 23 form the signal peptide. Residue histidine 88 participates in Zn(2+) binding. The Proton acceptor role is filled by glutamate 91. 2 residues coordinate Zn(2+): histidine 92 and glutamate 169.

The protein belongs to the peptidase M16 family. As to quaternary structure, monomer. It depends on Zn(2+) as a cofactor.

The protein resides in the periplasm. The catalysed reaction is Preferential cleavage of 16-Tyr-|-Leu-17 and 25-Phe-|-Tyr-26 bonds of oxidized insulin B chain. Also acts on other substrates of Mw less than 7 kDa such as insulin and glucagon.. In terms of biological role, endopeptidase that degrades small peptides of less than 7 kDa, such as glucagon and insulin. The sequence is that of Protease 3 (ptrA) from Escherichia coli O157:H7.